The sequence spans 405 residues: L-rhamnonate dehydratase (405 aa).

Substrate contacts are provided by His-33 and Arg-59. Residues Asp-226, Glu-252, and Glu-280 each contribute to the Mg(2+) site. Residue His-329 is the Proton acceptor of the active site. Glu-349 contributes to the substrate binding site.

The protein belongs to the mandelate racemase/muconate lactonizing enzyme family. RhamD subfamily. As to quaternary structure, homooctamer; tetramer of dimers. Requires Mg(2+) as cofactor.

The enzyme catalyses L-rhamnonate = 2-dehydro-3-deoxy-L-rhamnonate + H2O. Catalyzes the dehydration of L-rhamnonate to 2-keto-3-deoxy-L-rhamnonate (KDR). In Salmonella typhi, this protein is L-rhamnonate dehydratase.